Reading from the N-terminus, the 679-residue chain is Protein CASP (679 aa).

The Cytoplasmic segment spans residues 1–614 (MDTSVYSHAL…VILQNKMTRM (614 aa)). 2 coiled-coil regions span residues 14–90 (AKAD…EKVL) and 178–341 (RNWK…NYSD). Serine 364 bears the Phosphoserine mark. Positions 385 to 444 (ANKKLQATLAEYRSKSTAQEEERNELKKSVDQLKQQIATLKEANEKLETDLEKVENVSPH) form a coiled coil. Serine 450 and serine 453 each carry phosphoserine. The stretch at 492 to 540 (IVTKQRDRFRSRNMDLEKQLRQGNSEKGKLKLEISKLKGDNTKLYERIR) forms a coiled coil. Serine 555 bears the Phosphoserine mark. The helical; Anchor for type IV membrane protein transmembrane segment at 615–635 (VFLFYCIGLHGLVFMMSMYVI) threads the bilayer. Residues 636-679 (NISGYMTPEVGIVQSAKSSSNLNGGLGGAEKVAAGVGSVHGINR) are Lumenal-facing.

This sequence belongs to the CASP family.

It is found in the golgi apparatus membrane. Functionally, may be involved in intra-Golgi transport. This Saccharomyces cerevisiae (strain ATCC 204508 / S288c) (Baker's yeast) protein is Protein CASP (COY1).